Consider the following 305-residue polypeptide: HTH-type transcriptional regulator KdgR (305 aa).

Residues 55–116 (VSSVLKVFGI…GESEKYSLTL (62 aa)) form the HTH iclR-type domain. The segment at residues 76-95 (ITELSQRVMMSKSTVYRFLQ) is a DNA-binding region (H-T-H motif). The IclR-ED domain occupies 131 to 300 (LIRSADIQMR…ARNISDQMGY (170 aa)).

As to quaternary structure, homodimer.

The protein localises to the cytoplasm. Transcriptional repressor that negatively regulates the expression of genes involved in pectinolysis and in pectinase secretion. Controls genes involved in pectin catabolism, including the pectinase genes (pelA, pelB, pelC, pelE), genes involved in pectin catabolism (kdgT, ogl, kduI-kdgF) and the outT gene involved in pectinase secretion. Acts by binding directly to KdgR binding sites (KdgR-box) in the gene operator/promoter region. In Dickeya chrysanthemi (Pectobacterium chrysanthemi), this protein is HTH-type transcriptional regulator KdgR.